A 260-amino-acid chain; its full sequence is Emerin (260 aa).

An N-acetylmethionine modification is found at M1. The region spanning 1 to 45 (MDDYAVLSDTELAAVLRQYNIPHGPILGSTRKLYEKKIFEYETQR) is the LEM domain. 2 positions are modified to phosphoserine: S8 and S29. Residues 46–224 (RRLSPPSSSS…PTAALGQDRQ (179 aa)) are interaction with F-actin. S49 bears the Phosphoserine; by PKA mark. Residues S54, S69, S72, S88, S99, S142, S143, and S144 each carry the phosphoserine modification. Y162 is modified (phosphotyrosine). The tract at residues 169–188 (RPISNVSRSSLGLSYYPRSS) is interaction with CTNNB1. S172, S175, and S177 each carry phosphoserine. Residues 184–206 (YPRSSTSSVSSSSSSPSSWLTRR) are disordered. Residues 187–201 (SSTSSVSSSSSSPSS) show a composition bias toward low complexity. A helical membrane pass occupies residues 225 to 245 (VPLWGQLLLFLAFATFLLFVY).

As to quaternary structure, interacts with lamins A and C, BANF1, GMCL, BCLAF1 and YTHDC1/YT521. Interacts with TMEM43; the interaction retains emerin in the inner nuclear membrane. Interacts with ACTB, SPTAN1, F-actin, CTNNB1 and beta-tubulin. Interacts with SUN1 and SUN2. Interacts with TMEM201. Interacts with NEMP1.

It localises to the nucleus inner membrane. The protein localises to the nucleus outer membrane. Its function is as follows. Stabilizes and promotes the formation of a nuclear actin cortical network. Stimulates actin polymerization in vitro by binding and stabilizing the pointed end of growing filaments. Inhibits beta-catenin activity by preventing its accumulation in the nucleus. Acts by influencing the nuclear accumulation of beta-catenin through a CRM1-dependent export pathway. Links centrosomes to the nuclear envelope via a microtubule association. Required for proper localization of non-farnesylated prelamin-A/C. Together with NEMP1, contributes to nuclear envelope stiffness in germ cells. The sequence is that of Emerin (Emd) from Rattus norvegicus (Rat).